Reading from the N-terminus, the 334-residue chain is Thioredoxin reductase (334 aa).

FAD contacts are provided by residues 11 to 14 (SGAG), 40 to 41 (TA), Q45, N54, C148, D294, and 301 to 303 (RQA). C145 and C148 are oxidised to a cystine.

Belongs to the class-II pyridine nucleotide-disulfide oxidoreductase family. In terms of assembly, homodimer. It depends on FAD as a cofactor.

It carries out the reaction [thioredoxin]-dithiol + NADP(+) = [thioredoxin]-disulfide + NADPH + H(+). Component of the thioredoxin-thioredoxin reductase system which may be involved in biosynthesis of penicillins and cephalosporins and may be important in determining the thiol-disulfide redox balance. The chain is Thioredoxin reductase (TRR1) from Penicillium chrysogenum (Penicillium notatum).